A 313-amino-acid chain; its full sequence is HPr kinase/phosphorylase (313 aa).

Catalysis depends on residues His140 and Lys161. ATP is bound at residue 155 to 162 (GNSGAGKS). Residue Ser162 participates in Mg(2+) binding. Asp179 functions as the Proton acceptor; for phosphorylation activity. Proton donor; for dephosphorylation activity in the catalytic mechanism. Residues 203-212 (IEVRGLGILN) are important for the catalytic mechanism of both phosphorylation and dephosphorylation. Glu204 provides a ligand contact to Mg(2+). Arg246 is an active-site residue. The interval 267–272 (PVAAGR) is important for the catalytic mechanism of dephosphorylation.

It belongs to the HPrK/P family. As to quaternary structure, homohexamer. Mg(2+) serves as cofactor.

The catalysed reaction is [HPr protein]-L-serine + ATP = [HPr protein]-O-phospho-L-serine + ADP + H(+). It carries out the reaction [HPr protein]-O-phospho-L-serine + phosphate + H(+) = [HPr protein]-L-serine + diphosphate. Catalyzes the ATP- as well as the pyrophosphate-dependent phosphorylation of a specific serine residue in HPr, a phosphocarrier protein of the phosphoenolpyruvate-dependent sugar phosphotransferase system (PTS). HprK/P also catalyzes the pyrophosphate-producing, inorganic phosphate-dependent dephosphorylation (phosphorolysis) of seryl-phosphorylated HPr (P-Ser-HPr). The polypeptide is HPr kinase/phosphorylase (Aromatoleum aromaticum (strain DSM 19018 / LMG 30748 / EbN1) (Azoarcus sp. (strain EbN1))).